Reading from the N-terminus, the 561-residue chain is V-type proton ATPase catalytic subunit A (561 aa).

G190 to T197 contacts ATP.

The protein belongs to the ATPase alpha/beta chains family. In terms of assembly, V-ATPase is a heteromultimeric enzyme composed of a peripheral catalytic V1 complex (main components: subunits A, B, C, D, E, and F) attached to an integral membrane V0 proton pore complex (main component: the proteolipid protein). As to expression, high expression in the mesocotyl tip of etiolated seedlings compared to the base.

It catalyses the reaction ATP + H2O + 4 H(+)(in) = ADP + phosphate + 5 H(+)(out). Catalytic subunit of the peripheral V1 complex of vacuolar ATPase. V-ATPase vacuolar ATPase is responsible for acidifying a variety of intracellular compartments in eukaryotic cells. The protein is V-type proton ATPase catalytic subunit A of Zea mays (Maize).